The following is a 314-amino-acid chain: Methionyl-tRNA formyltransferase (314 aa).

Residue 113 to 116 participates in (6S)-5,6,7,8-tetrahydrofolate binding; sequence SLLP.

This sequence belongs to the Fmt family.

It carries out the reaction L-methionyl-tRNA(fMet) + (6R)-10-formyltetrahydrofolate = N-formyl-L-methionyl-tRNA(fMet) + (6S)-5,6,7,8-tetrahydrofolate + H(+). Attaches a formyl group to the free amino group of methionyl-tRNA(fMet). The formyl group appears to play a dual role in the initiator identity of N-formylmethionyl-tRNA by promoting its recognition by IF2 and preventing the misappropriation of this tRNA by the elongation apparatus. The protein is Methionyl-tRNA formyltransferase of Pseudomonas syringae pv. syringae (strain B728a).